A 100-amino-acid polypeptide reads, in one-letter code: MARKSLIQREKKRQKLEQKYHLIRRSSKKEISKVPSLSEKWKIHGKLQSSPRNSAPTRLHRRCFSTGRPRANYRDFGLSGHILREMVHACLLPGATRSSW.

This sequence belongs to the universal ribosomal protein uS14 family. As to quaternary structure, part of the 30S ribosomal subunit.

It is found in the plastid. The protein resides in the chloroplast. In terms of biological role, binds 16S rRNA, required for the assembly of 30S particles. The protein is Small ribosomal subunit protein uS14c of Eucalyptus globulus subsp. globulus (Tasmanian blue gum).